A 268-amino-acid polypeptide reads, in one-letter code: MGLTRRIIPCLDLKAGRVVKGVNFEGLRDAGDPVELASRYNEQGADEVVFLDIAASKDNRDTMIDVIGRAADELFLPLTVGGGIRTVKDIQDILRAGADKVSLNTSAVKTPDVINEGSHLFGNQCIVLAEDVRRNYEMRDGVTPIHLADGRVCWYEVVIYGGSQRTGIDAVSWAQEGVKRGAGEILLTSMETDGVKTGFDLEITAAISENVDVPVIASGGVGTLEHFYDGFVKGKADACLAASVFHYGEMTIRSVKEYLASRGVLVRL.

Residues aspartate 12 and aspartate 131 contribute to the active site.

It belongs to the HisA/HisF family. In terms of assembly, heterodimer of HisH and HisF.

It localises to the cytoplasm. It catalyses the reaction 5-[(5-phospho-1-deoxy-D-ribulos-1-ylimino)methylamino]-1-(5-phospho-beta-D-ribosyl)imidazole-4-carboxamide + L-glutamine = D-erythro-1-(imidazol-4-yl)glycerol 3-phosphate + 5-amino-1-(5-phospho-beta-D-ribosyl)imidazole-4-carboxamide + L-glutamate + H(+). Its pathway is amino-acid biosynthesis; L-histidine biosynthesis; L-histidine from 5-phospho-alpha-D-ribose 1-diphosphate: step 5/9. Its function is as follows. IGPS catalyzes the conversion of PRFAR and glutamine to IGP, AICAR and glutamate. The HisF subunit catalyzes the cyclization activity that produces IGP and AICAR from PRFAR using the ammonia provided by the HisH subunit. This chain is Imidazole glycerol phosphate synthase subunit HisF, found in Methanocorpusculum labreanum (strain ATCC 43576 / DSM 4855 / Z).